Reading from the N-terminus, the 329-residue chain is Ficolin-2 (329 aa).

The signal sequence occupies residues 1–29 (MELGGAAGALGPSGPLLVCLCFGTLAAQA). Residues 52-111 (GCPGLPGAPGLKGETGAAGLKGERGLPGVPGKAGPAGPKGSTGAQGEKGARGEKGESGQL) form the Collagen-like domain. The disordered stretch occupies residues 64-113 (GETGAAGLKGERGLPGVPGKAGPAGPKGSTGAQGEKGARGEKGESGQLHS). Positions 77 to 90 (LPGVPGKAGPAGPK) are enriched in low complexity. The Fibrinogen C-terminal domain occupies 112 to 329 (HSCATGPRTC…KVSEMKLRLT (218 aa)). 2 cysteine pairs are disulfide-bonded: Cys114–Cys142 and Cys121–Cys149. Ca(2+)-binding residues include Asp265, Asp267, Ser269, and Ser271. A disulfide bridge links Cys273 with Cys286. N-linked (GlcNAc...) asparagine glycosylation occurs at Asn316.

It belongs to the ficolin lectin family. Homotrimer. Interacts with elastin. Interacts with MASP1 and MASP2.

Its subcellular location is the secreted. May function in innate immunity through activation of the lectin complement pathway. Calcium-dependent and GlcNAc-binding lectin. This is Ficolin-2 (FCN2) from Bos taurus (Bovine).